A 118-amino-acid chain; its full sequence is Basic phospholipase A2 3 (118 aa).

Cystine bridges form between C11–C71, C27–C117, C29–C45, C44–C98, C51–C91, C60–C84, and C78–C89. Residues Y28, G30, and G32 each contribute to the Ca(2+) site. Residue H48 is part of the active site. D49 is a Ca(2+) binding site. D92 is a catalytic residue.

It belongs to the phospholipase A2 family. Group I subfamily. D49 sub-subfamily. As to quaternary structure, monomer. Ca(2+) is required as a cofactor. In terms of tissue distribution, expressed by the venom gland.

Its subcellular location is the secreted. The catalysed reaction is a 1,2-diacyl-sn-glycero-3-phosphocholine + H2O = a 1-acyl-sn-glycero-3-phosphocholine + a fatty acid + H(+). Functionally, PLA2 catalyzes the calcium-dependent hydrolysis of the 2-acyl groups in 3-sn-phosphoglycerides. The polypeptide is Basic phospholipase A2 3 (Laticauda semifasciata (Black-banded sea krait)).